The chain runs to 213 residues: Peptidyl-tRNA hydrolase (213 aa).

Tyrosine 26 lines the tRNA pocket. Histidine 31 acts as the Proton acceptor in catalysis. Residues tyrosine 78, asparagine 80, and asparagine 126 each contribute to the tRNA site.

The protein belongs to the PTH family. As to quaternary structure, monomer.

It localises to the cytoplasm. The catalysed reaction is an N-acyl-L-alpha-aminoacyl-tRNA + H2O = an N-acyl-L-amino acid + a tRNA + H(+). In terms of biological role, hydrolyzes ribosome-free peptidyl-tRNAs (with 1 or more amino acids incorporated), which drop off the ribosome during protein synthesis, or as a result of ribosome stalling. Its function is as follows. Catalyzes the release of premature peptidyl moieties from peptidyl-tRNA molecules trapped in stalled 50S ribosomal subunits, and thus maintains levels of free tRNAs and 50S ribosomes. The polypeptide is Peptidyl-tRNA hydrolase (Nostoc punctiforme (strain ATCC 29133 / PCC 73102)).